The chain runs to 399 residues: Presilphiperfolan-8-beta-ol synthase (399 aa).

Positions Met1–Phe60 are disordered. A compositionally biased stretch (low complexity) spans Thr15 to Ser27. A compositionally biased stretch (polar residues) spans Gly28–Leu37. Mg(2+) is bound by residues Asp141, Asn285, and Ser289. The DDXXD motif signature appears at Asp141–Asp145. The (2E,6E)-farnesyl diphosphate site is built by Arg373 and Tyr374.

The protein belongs to the terpene synthase family. The cofactor is Mg(2+).

It carries out the reaction (2E,6E)-farnesyl diphosphate + H2O = presilphiperfolan-8beta-ol + diphosphate. The protein operates within secondary metabolite biosynthesis. Functionally, presilphiperfolan-8-beta-ol synthase; part of the gene cluster that mediates the biosynthesis of botrydial. Botrydial is necessary for colonization of plant tissue by the T4 strain. It is a strain-dependent virulence factor since highly aggressive strains like SAS56 or B05 still retain substantial virulence when botrydial synthesis is impaired, since they produce also botcinic acid. The first step of botrydial biosynthesis is performed by the sesquiterpene synthase BOT2 which catalyzes the cyclization of farnesyl diphosphate (FPP) to presilphiperfolan-8-beta-ol (PSP). The cytochrome P450 monooxygenase BOT4 then catalyzes the hydroxylation at C-4 to give a probotryane intermediate. Acetylation of the hydroxyl at C-4 is carried out by the acetyltransferase BOT5, followed by the combined action of the P450 monooxygenases BOT3 and BOT1, to yield finally the glycol, via the regio- and stereospecific hydroxylations at C-10 and C-15 of the probotryane intermediates, respectively. The cleavage of the C10-C15 bond of probotryane skeleton is an intriguing and chemically important reaction, which could be mediated by some of the monooxygenases or by a combination of them. It is possible that either BOT3 or BOT1 would oxidize either the 10- or the 15-hydroxy group to the hydroperoxide derivative, which would then undergo heterolytic fragmentation to give the dialdehyde botrydial. Finally, the dehydrogenase BOT7 might be involved in the conversion of botrydial to dihydrobotrydial. The polypeptide is Presilphiperfolan-8-beta-ol synthase (BOT2) (Botryotinia fuckeliana (Noble rot fungus)).